Here is a 564-residue protein sequence, read N- to C-terminus: Pumilio homolog 9 (564 aa).

The region spanning 222 to 564 (LEDTVLIGQG…KIFSKTILKK (343 aa)) is the PUM-HD domain. 8 Pumilio repeats span residues 249–284 (EIYGSVNLMAKDQIGCRVLQKLVEEGTFHEAKVILL), 285–320 (AIIDHVVELSMDPFGNYIVQKLFDVSDEEQRTLIVS), 321–359 (VLTSNPRELIRICLNTYGTRVVQKMIETVKTKQQIALVK), 361–396 (GLKPGFLALVKDLNGNHVIQSCLQTLGPNDNEFVLE), 397–432 (AATKYCAEIAIHRHGCCVLQCCISNSVGLQRERLVA), 433–469 (EISRNSLHLSQDPFGNYVVQYLIDQQVSAVKLLVQFR), 470–501 (MHYAELATQKFSSHVIEKCLRKYPESRAEIVR), and 502–539 (ELLCVPNFEYLLQDPYANYVIQTALSVTKGPVRAKLVA).

It localises to the cytoplasm. In terms of biological role, sequence-specific RNA-binding protein that regulates translation and mRNA stability by binding the 3'-UTR of target mRNAs. The sequence is that of Pumilio homolog 9 (APUM9) from Arabidopsis thaliana (Mouse-ear cress).